The primary structure comprises 203 residues: Glycerol-3-phosphate acyltransferase (203 aa).

Helical transmembrane passes span 4 to 24 (LTFA…AVLI), 68 to 88 (IPVY…FIGI), 104 to 124 (GGKG…DMGS), and 125 to 145 (FMIV…LAAI).

It belongs to the PlsY family. Probably interacts with PlsX.

The protein resides in the cell inner membrane. It catalyses the reaction an acyl phosphate + sn-glycerol 3-phosphate = a 1-acyl-sn-glycero-3-phosphate + phosphate. It functions in the pathway lipid metabolism; phospholipid metabolism. Catalyzes the transfer of an acyl group from acyl-phosphate (acyl-PO(4)) to glycerol-3-phosphate (G3P) to form lysophosphatidic acid (LPA). This enzyme utilizes acyl-phosphate as fatty acyl donor, but not acyl-CoA or acyl-ACP. This is Glycerol-3-phosphate acyltransferase from Tolumonas auensis (strain DSM 9187 / NBRC 110442 / TA 4).